We begin with the raw amino-acid sequence, 1441 residues long: Cleavage and polyadenylation specificity factor subunit 1 (1441 aa).

Disordered stretches follow at residues 404–435, 545–569, 713–775, and 899–921; these read PASSVREAADKEEPPSKKKRVEPAVGWTGGKT, EEETPKAESTEQEPSAPKAEEDGRR, GGAR…PAPF, and FREKKPKPSKKKAEGCSTEEGSG. Over residues 410 to 419 the composition is skewed to basic and acidic residues; sequence EAADKEEPPS. A phosphoserine mark is found at S754 and S764. Residues 756–773 show a composition bias toward basic and acidic residues; sequence SKEEARRSSQPPADRDPA.

The protein belongs to the CPSF1 family. As to quaternary structure, component of the cleavage and polyadenylation specificity factor (CPSF) complex, composed of CPSF1, CPSF2, CPSF3, CPSF4 and FIP1L1. Found in a complex with CPSF1, FIP1L1 and PAPOLA. Interacts with FIP1L1 and SRRM1. Interacts with TUT1; the interaction is direct and mediates the recruitment of the CPSF complex on the 3'UTR of selected pre-mRNAs. Interacts with TENT2/GLD2.

Its subcellular location is the nucleus. The protein resides in the nucleoplasm. Component of the cleavage and polyadenylation specificity factor (CPSF) complex that plays a key role in pre-mRNA 3'-end formation, recognizing the AAUAAA signal sequence and interacting with poly(A) polymerase and other factors to bring about cleavage and poly(A) addition. This subunit is involved in the RNA recognition step of the polyadenylation reaction. May play a role in eye morphogenesis and the development of retinal ganglion cell projections to the midbrain. In Mus musculus (Mouse), this protein is Cleavage and polyadenylation specificity factor subunit 1 (Cpsf1).